Reading from the N-terminus, the 212-residue chain is Protein-L-isoaspartate O-methyltransferase (212 aa).

Residue Ser-60 is part of the active site.

This sequence belongs to the methyltransferase superfamily. L-isoaspartyl/D-aspartyl protein methyltransferase family.

The protein localises to the cytoplasm. The enzyme catalyses [protein]-L-isoaspartate + S-adenosyl-L-methionine = [protein]-L-isoaspartate alpha-methyl ester + S-adenosyl-L-homocysteine. Functionally, catalyzes the methyl esterification of L-isoaspartyl residues in peptides and proteins that result from spontaneous decomposition of normal L-aspartyl and L-asparaginyl residues. It plays a role in the repair and/or degradation of damaged proteins. This is Protein-L-isoaspartate O-methyltransferase from Pseudomonas entomophila (strain L48).